A 489-amino-acid chain; its full sequence is Lysine--tRNA ligase (489 aa).

Mg(2+) is bound by residues E399 and E406.

It belongs to the class-II aminoacyl-tRNA synthetase family. Homodimer. It depends on Mg(2+) as a cofactor.

It localises to the cytoplasm. It carries out the reaction tRNA(Lys) + L-lysine + ATP = L-lysyl-tRNA(Lys) + AMP + diphosphate. The protein is Lysine--tRNA ligase (lysS) of Mycoplasma pneumoniae (strain ATCC 29342 / M129 / Subtype 1) (Mycoplasmoides pneumoniae).